Here is a 118-residue protein sequence, read N- to C-terminus: Large ribosomal subunit protein bL20 (118 aa).

The protein belongs to the bacterial ribosomal protein bL20 family.

Its function is as follows. Binds directly to 23S ribosomal RNA and is necessary for the in vitro assembly process of the 50S ribosomal subunit. It is not involved in the protein synthesizing functions of that subunit. In Campylobacter curvus (strain 525.92), this protein is Large ribosomal subunit protein bL20.